The chain runs to 535 residues: Probable deoxycholate-binding periplasmic protein YgiS (535 aa).

The signal sequence occupies residues 1–20 (MYTRNLLWLVSLVSAAPLYA).

It belongs to the bacterial solute-binding protein 5 family.

It localises to the periplasm. In terms of biological role, probably part of a deoxycholate transport system. Its expression in the presence of deoxycholate in a ygiS deletion mutant increases intracellular deoxycholate levels and decreases cell growth; higher expression in the presence of deoxycholate inhibits cell growth completely. Bile acid detergents such as deoxycholate are important for host defense against bacterial growth in the gall bladder and duodenum. The sequence is that of Probable deoxycholate-binding periplasmic protein YgiS (ygiS) from Escherichia coli (strain K12).